A 347-amino-acid polypeptide reads, in one-letter code: Dehydratase asqC (347 aa).

The N-terminal stretch at 1 to 18 (MRPAILAAFSTLPAAAKA) is a signal peptide. 7 N-linked (GlcNAc...) asparagine glycosylation sites follow: Asn-51, Asn-103, Asn-131, Asn-143, Asn-215, Asn-264, and Asn-281.

It carries out the reaction [(1'E)-5'-(3',3'-dimethyloxiran-2'-yl)-3'-hydroxy-3'-methylpent-1'-en-1'-yl]-quinolinone B = (1'E,3'E)-5-(3,3-dimethyloxiran-2-yl)-3-methylhexa-1,3-dienyl-quinolinone B + H2O. It functions in the pathway secondary metabolite biosynthesis. The protein operates within alkaloid biosynthesis. Its pathway is mycotoxin biosynthesis. Its function is as follows. Dehydratase; part of the gene cluster that mediates the biosynthesis of the aspoquinolone mycotoxins. Within the pathway, the dehydratase asqC catalyzes the dehydratation of the epoxide at C-3 to produce (1'E,3'E)-5-(3,3-dimethyloxiran-2-yl)-3-methylhexa-1,3-dienyl-quinolinone B. The first step of the pathway is catalyzed by the nonribosomal peptide synthetase asqK that condenses anthranilic acid and O-methyl-L-tyrosine to produce 4'-methoxycyclopeptin. 4'-methoxycyclopeptin is then converted to 4'-methoxydehydrocyclopeptin by the ketoglutarate-dependent dioxygenase asqJ. AsqJ also converts its first product 4'-methoxydehydrocyclopeptin to 4'-methoxycyclopenin. The following conversion of 4'-methoxycyclopenin into 4'-methoxyviridicatin is catalyzed by the cyclopenase asqI. 4'-methoxyviridicatin is the precursor of quinolone natural products, and is further converted to quinolinone B. The prenyltransferase asqH1 then catalyzes the canonical Friedel-Crafts alkylation of quinolinone B with dimethylallyl cation to yield dimethylallyl quinolone, which is subjected to FAD-dependent dehydrogenation by the FAD-linked oxidoreductase asqF to yield conjugated aryl diene. The delta(3') double bond then serves as the site of the second alkylation with DMAPP catalyzed by the prenyltransferase asqH2 to yield a carbenium ion intermediate, which can be attacked by H(2)O to yield a styrenyl quinolone containing a C3'-hydroxyprenyl chain. The FAD-dependent monooxygenase asqG performs epoxidation of the terminal C7'-C8' olefin. Finally, after dehydratation of the epoxide at C3 by asqC, the quinolone epoxide rearrangement protein asqO catalyzes an enzymatic 3-exo-tet cyclization to yield the cyclopropyl-THF ring system in aspoquinolone. This Emericella nidulans (strain FGSC A4 / ATCC 38163 / CBS 112.46 / NRRL 194 / M139) (Aspergillus nidulans) protein is Dehydratase asqC.